Reading from the N-terminus, the 967-residue chain is Phosphoenolpyruvate carboxylase 1 (967 aa).

The residue at position 11 (serine 11) is a Phosphoserine. Catalysis depends on residues histidine 173 and lysine 602. Residue serine 704 is modified to Phosphoserine.

The protein belongs to the PEPCase type 1 family. In terms of assembly, homotetramer. Mg(2+) serves as cofactor. The cofactor is Mn(2+). In terms of processing, the phosphorylation of Ser-11 is reversibly promoted by inorganic phosphate (Pi) deprivation. Enhanced activity by phosphorylation at pH 7.3 by lowering Km and sensitivity to inhibition by L-malate and L-aspartate, while enhancing activation by glucose 6-phosphate. Expressed in all plant organs, with higher levels in roots.

Its subcellular location is the cytoplasm. The catalysed reaction is oxaloacetate + phosphate = phosphoenolpyruvate + hydrogencarbonate. With respect to regulation, by light-reversible phosphorylation. Activated by inorganic phosphate (Pi) deprivation and glucose 6-phosphate. Inhibited by L-malate and L-aspartate. In terms of biological role, through the carboxylation of phosphoenolpyruvate (PEP) it forms oxaloacetate, a four-carbon dicarboxylic acid source for the tricarboxylic acid cycle. Contributes probably to the adaptation to inorganic phosphate (Pi) deprivation. This Arabidopsis thaliana (Mouse-ear cress) protein is Phosphoenolpyruvate carboxylase 1 (PPC1).